The primary structure comprises 257 residues: Imidazole glycerol phosphate synthase subunit HisF (257 aa).

Catalysis depends on residues D12 and D131.

It belongs to the HisA/HisF family. Heterodimer of HisH and HisF.

Its subcellular location is the cytoplasm. The enzyme catalyses 5-[(5-phospho-1-deoxy-D-ribulos-1-ylimino)methylamino]-1-(5-phospho-beta-D-ribosyl)imidazole-4-carboxamide + L-glutamine = D-erythro-1-(imidazol-4-yl)glycerol 3-phosphate + 5-amino-1-(5-phospho-beta-D-ribosyl)imidazole-4-carboxamide + L-glutamate + H(+). Its pathway is amino-acid biosynthesis; L-histidine biosynthesis; L-histidine from 5-phospho-alpha-D-ribose 1-diphosphate: step 5/9. Functionally, IGPS catalyzes the conversion of PRFAR and glutamine to IGP, AICAR and glutamate. The HisF subunit catalyzes the cyclization activity that produces IGP and AICAR from PRFAR using the ammonia provided by the HisH subunit. In Saccharophagus degradans (strain 2-40 / ATCC 43961 / DSM 17024), this protein is Imidazole glycerol phosphate synthase subunit HisF.